An 84-amino-acid polypeptide reads, in one-letter code: U8-theraphotoxin-Hhn1b (84 aa).

Positions 1 to 21 (MKVVLIVCLVWVMAMMELVSC) are cleaved as a signal peptide. Intrachain disulfides connect Cys23–Cys35, Cys29–Cys44, Cys34–Cys67, and Cys54–Cys75.

This sequence belongs to the AVIT (prokineticin) family. In terms of tissue distribution, expressed by the venom gland.

It is found in the secreted. In Cyriopagopus hainanus (Chinese bird spider), this protein is U8-theraphotoxin-Hhn1b.